We begin with the raw amino-acid sequence, 214 residues long: Putative AgrB-like protein (214 aa).

A run of 5 helical transmembrane segments spans residues 41 to 61, 82 to 102, 109 to 129, 154 to 174, and 182 to 202; these read IISV…LIFL, CTLL…SSFF, IIVF…FKFA, ILTI…NLGW, and LSII…GNIL.

It belongs to the AgrB family.

Its subcellular location is the cell membrane. Its function is as follows. May be involved in the proteolytic processing of a quorum sensing system signal molecule precursor. In Clostridium perfringens (strain SM101 / Type A), this protein is Putative AgrB-like protein.